The chain runs to 574 residues: Putative dehydratase IlvD1 (574 aa).

[4Fe-4S] cluster contacts are provided by Cys-124 and Cys-197.

The protein belongs to the IlvD/Edd family. The cofactor is [4Fe-4S] cluster.

Its function is as follows. Involved in the degradation of galactose via the DeLey-Doudoroff pathway. The chain is Putative dehydratase IlvD1 (ilvD1) from Rhizobium meliloti (strain 1021) (Ensifer meliloti).